The primary structure comprises 861 residues: Leucine--tRNA ligase (861 aa).

A 'HIGH' region motif is present at residues Pro-42–His-52. Residues Lys-619–Ser-623 carry the 'KMSKS' region motif. Lys-622 lines the ATP pocket.

This sequence belongs to the class-I aminoacyl-tRNA synthetase family.

The protein resides in the cytoplasm. The catalysed reaction is tRNA(Leu) + L-leucine + ATP = L-leucyl-tRNA(Leu) + AMP + diphosphate. This chain is Leucine--tRNA ligase, found in Haemophilus influenzae (strain PittGG).